A 711-amino-acid chain; its full sequence is MSTIVIFLAALLACSLLAGWLIKVRSRRRQLPWTNAFADAQTRKLTPEERSAVENYLESLTQVLQVPGPTGASAAPISLALNAESNNVMMLTHAITRYGISTDDPNKWRYYLDSVEVHLPPFWEQYINDENTVELIHTDSLPLVISLNGHTLQEYMQETRSYALQPVPSTQASIRGEESEQIELLNIRKETHEEYALSRPRGLREALLIVASFLMFFFCLITPDVFVPWLAGGALLLLGAGLWGLFAPPAKSSLREIHCLRGTPRRWGLFGENDQEQINNISLGIIDLVYPAHWQPYIAQDLGQQTDIDIYLDRHVVRQGRYLSLHDEVKNFPLQHWLRSTIIAAGSLLVLFMLLFWIPLDMPLKFTLSWMKGAQTIEATSVKQLADAGVRVGDTLRISGTGMCNIRTSGTWSAKTNSPFLPFDCSQIIWNDARSLPLPESELVNKATALTEAVNRQLHPKPEDESRVSASLRSAIQKSGMVLLDDFGDIVLKTADLCSAKDDCVRLKNALVNLGNSKDWDALVKRANAGKLDGVNVLLRPVSAESLDNLVATSTAPFITHETARAAQSLNSPAPGGFLIVSDEGSDFVDQPWPSASLYDYPPQEQWNAFQKLAQMLMHTPFNAEGIVTKIFTDANGTQHIGLHPIPDRSGLWRYLSTTLLLLTMLGSAIYNGVQAWRRYQRHRTRMMEIQAYYESCLNPQLITPSESLIE.

Position 1 (Met-1) is a topological domain, periplasmic. A helical transmembrane segment spans residues Ser-2–Ile-22. Residues Lys-23–Arg-204 are Cytoplasmic-facing. 2 consecutive transmembrane segments (helical) span residues Glu-205–Val-225 and Phe-226–Phe-246. Residues Ala-247–Arg-339 are Cytoplasmic-facing. Residues Ser-340 to Leu-360 traverse the membrane as a helical segment. At Asp-361–Tyr-655 the chain is on the periplasmic side. Residues Leu-656–Ala-676 form a helical membrane-spanning segment. Over Trp-677–Glu-711 the chain is Cytoplasmic.

Belongs to the IgaA family.

It localises to the cell inner membrane. The sequence is that of Putative membrane protein IgaA homolog (yrfF) from Escherichia coli (strain K12).